Consider the following 346-residue polypeptide: Small ribosomal subunit biogenesis GTPase RsgA (346 aa).

The CP-type G domain occupies 98–261 (VQGGRGPQLA…VIDTPGMRTL (164 aa)). GTP-binding positions include 148 to 151 (TKAD) and 200 to 208 (GSSGVGKST). Zn(2+)-binding residues include cysteine 284, cysteine 289, histidine 291, and cysteine 297. A disordered region spans residues 317-346 (RKLSDENQHNTPVQSGPRGAKSPAGRGKRR).

Belongs to the TRAFAC class YlqF/YawG GTPase family. RsgA subfamily. In terms of assembly, monomer. Associates with 30S ribosomal subunit, binds 16S rRNA. Zn(2+) serves as cofactor.

It is found in the cytoplasm. In terms of biological role, one of several proteins that assist in the late maturation steps of the functional core of the 30S ribosomal subunit. Helps release RbfA from mature subunits. May play a role in the assembly of ribosomal proteins into the subunit. Circularly permuted GTPase that catalyzes slow GTP hydrolysis, GTPase activity is stimulated by the 30S ribosomal subunit. The sequence is that of Small ribosomal subunit biogenesis GTPase RsgA from Mesorhizobium japonicum (strain LMG 29417 / CECT 9101 / MAFF 303099) (Mesorhizobium loti (strain MAFF 303099)).